Reading from the N-terminus, the 100-residue chain is NADH-quinone oxidoreductase subunit K (100 aa).

3 helical membrane-spanning segments follow: residues 2-22, 29-49, and 63-83; these read VPTTYYLALSGLLFALGMIGV, IMVFLSVELMLNAANLSLVAF, and FIVMTLAAAEVAIGLAIIVAI.

This sequence belongs to the complex I subunit 4L family. As to quaternary structure, NDH-1 is composed of 15 different subunits. Subunits NuoA, H, J, K, L, M, N constitute the membrane sector of the complex.

Its subcellular location is the cell membrane. The enzyme catalyses a quinone + NADH + 5 H(+)(in) = a quinol + NAD(+) + 4 H(+)(out). In terms of biological role, NDH-1 shuttles electrons from NADH, via FMN and iron-sulfur (Fe-S) centers, to quinones in the respiratory chain. The immediate electron acceptor for the enzyme in this species is believed to be a menaquinone. Couples the redox reaction to proton translocation (for every two electrons transferred, four hydrogen ions are translocated across the cytoplasmic membrane), and thus conserves the redox energy in a proton gradient. The chain is NADH-quinone oxidoreductase subunit K from Deinococcus deserti (strain DSM 17065 / CIP 109153 / LMG 22923 / VCD115).